A 294-amino-acid chain; its full sequence is Phosphatidylserine decarboxylase proenzyme (294 aa).

Active-site charge relay system; for autoendoproteolytic cleavage activity residues include aspartate 113, histidine 169, and serine 256. The active-site Schiff-base intermediate with substrate; via pyruvic acid; for decarboxylase activity is serine 256. Serine 256 is modified (pyruvic acid (Ser); by autocatalysis).

It belongs to the phosphatidylserine decarboxylase family. PSD-B subfamily. Prokaryotic type II sub-subfamily. As to quaternary structure, heterodimer of a large membrane-associated beta subunit and a small pyruvoyl-containing alpha subunit. Requires pyruvate as cofactor. In terms of processing, is synthesized initially as an inactive proenzyme. Formation of the active enzyme involves a self-maturation process in which the active site pyruvoyl group is generated from an internal serine residue via an autocatalytic post-translational modification. Two non-identical subunits are generated from the proenzyme in this reaction, and the pyruvate is formed at the N-terminus of the alpha chain, which is derived from the carboxyl end of the proenzyme. The autoendoproteolytic cleavage occurs by a canonical serine protease mechanism, in which the side chain hydroxyl group of the serine supplies its oxygen atom to form the C-terminus of the beta chain, while the remainder of the serine residue undergoes an oxidative deamination to produce ammonia and the pyruvoyl prosthetic group on the alpha chain. During this reaction, the Ser that is part of the protease active site of the proenzyme becomes the pyruvoyl prosthetic group, which constitutes an essential element of the active site of the mature decarboxylase.

Its subcellular location is the cell membrane. The catalysed reaction is a 1,2-diacyl-sn-glycero-3-phospho-L-serine + H(+) = a 1,2-diacyl-sn-glycero-3-phosphoethanolamine + CO2. It participates in phospholipid metabolism; phosphatidylethanolamine biosynthesis; phosphatidylethanolamine from CDP-diacylglycerol: step 2/2. Its function is as follows. Catalyzes the formation of phosphatidylethanolamine (PtdEtn) from phosphatidylserine (PtdSer). The sequence is that of Phosphatidylserine decarboxylase proenzyme from Clostridium perfringens (strain ATCC 13124 / DSM 756 / JCM 1290 / NCIMB 6125 / NCTC 8237 / Type A).